The chain runs to 679 residues: Methionine--tRNA ligase (679 aa).

The short motif at 14-24 is the 'HIGH' region element; it reads PYANGSIHLGH. 4 residues coordinate Zn(2+): cysteine 145, cysteine 148, cysteine 158, and cysteine 161. Positions 331 to 335 match the 'KMSKS' region motif; the sequence is KMSKS. Lysine 334 serves as a coordination point for ATP. The tRNA-binding domain occupies 577-679; the sequence is AFAAVDLRIA…SGAKPGQRVK (103 aa).

Belongs to the class-I aminoacyl-tRNA synthetase family. MetG type 1 subfamily. As to quaternary structure, homodimer. Zn(2+) is required as a cofactor.

The protein resides in the cytoplasm. It carries out the reaction tRNA(Met) + L-methionine + ATP = L-methionyl-tRNA(Met) + AMP + diphosphate. In terms of biological role, is required not only for elongation of protein synthesis but also for the initiation of all mRNA translation through initiator tRNA(fMet) aminoacylation. In Pseudomonas paraeruginosa (strain DSM 24068 / PA7) (Pseudomonas aeruginosa (strain PA7)), this protein is Methionine--tRNA ligase.